The chain runs to 354 residues: Rhodopsin (354 aa).

Topologically, residues 1-36 (MNGTEGPYFYVPMVNTTGIVRSPYEYPQYYLVSPAA) are extracellular. N2 and N15 each carry an N-linked (GlcNAc...) asparagine glycan. The chain crosses the membrane as a helical span at residues 37 to 61 (YACLGAYMFFLILVGFPVNFLTLYV). Residues 62–73 (TIEHKKLRTPLN) are Cytoplasmic-facing. The chain crosses the membrane as a helical span at residues 74–96 (YILLNLAVADLFMVFGGFTTTIY). Residues 97-110 (TSMHGYFVLGRLGC) are Extracellular-facing. A disulfide bridge connects residues C110 and C187. A helical transmembrane segment spans residues 111–133 (NLEGYFATLGGEIGLWSLVVLAV). Residues 134 to 136 (ERW) carry the 'Ionic lock' involved in activated form stabilization motif. Residues 134–152 (ERWLVVCKPISNFRFTENH) are Cytoplasmic-facing. The helical transmembrane segment at 153–173 (AIMGLVFTWIMANACAAPPLL) threads the bilayer. Residues 174–202 (GWSRYIPEGMQCSCGVDYYTRAEGFNNES) lie on the Extracellular side of the membrane. A helical membrane pass occupies residues 203–224 (FVIYMFICHFCIPLVVVFFCYG). At 225–252 (RLLCAVKEAAAAQQESETTQRAEREVTR) the chain is on the cytoplasmic side. A helical membrane pass occupies residues 253 to 274 (MVVILVIGFLVCWTPYASVAWY). Topologically, residues 275–286 (IFSNQGSEFGPL) are extracellular. Residues 287-308 (FMTIPAFFAKSSSIYNPMIYIC) traverse the membrane as a helical segment. The residue at position 296 (K296) is an N6-(retinylidene)lysine. Residues 309 to 354 (MNKQFRHCMITTLCCGKNPFEEEEGASTTASKTEASSVSSSSVSPA) lie on the Cytoplasmic side of the membrane. S-palmitoyl cysteine attachment occurs at residues C322 and C323. The segment at 333–354 (GASTTASKTEASSVSSSSVSPA) is disordered. Residues 334-354 (ASTTASKTEASSVSSSSVSPA) are compositionally biased toward low complexity.

It belongs to the G-protein coupled receptor 1 family. Opsin subfamily. In terms of processing, phosphorylated on some or all of the serine and threonine residues present in the C-terminal region. Contains one covalently linked retinal chromophore.

It localises to the membrane. It is found in the cell projection. The protein resides in the cilium. The protein localises to the photoreceptor outer segment. Functionally, photoreceptor required for image-forming vision at low light intensity. While most salt water fish species use retinal as chromophore, most freshwater fish use 3-dehydroretinal, or a mixture of retinal and 3-dehydroretinal. Light-induced isomerization of 11-cis to all-trans retinal triggers a conformational change that activates signaling via G-proteins. Subsequent receptor phosphorylation mediates displacement of the bound G-protein alpha subunit by arrestin and terminates signaling. The chain is Rhodopsin (rho) from Gambusia affinis (Western mosquitofish).